We begin with the raw amino-acid sequence, 399 residues long: MAAPSPSGGGGSGGGSGSGTPGPVGSPAPGHPAVSSMQGKRKALKLNFANPPFKSTARFTLNPNPTGVQNPHIERLRTHSIESSGKLKISPEQHWDFTAEDLKDLGEIGRGAYGSVNKMVHKPSGQIMAVKRIRSTVDEKEQKQLLMDLDVVMRSSDCPYIVQFYGALFREGDCWICMELMSTSFDKFYKYVYSVLDDVIPEEILGKITLATVKALNHLKENLKIIHRDIKPSNILLDRSGNIKLCDFGISGQLVDSIAKTRDAGCRPYMAPERIDPSASRQGYDVRSDVWSLGITLYELATGRFPYPKWNSVFDQLTQVVKGDPPQLSNSEEREFSPSFINFVNLCLTKDESKRPKYKELLKHPFILMYEERAVEVACYVCKILDQMPATPSSPMYVD.

Positions 1 to 40 (MAAPSPSGGGGSGGGSGSGTPGPVGSPAPGHPAVSSMQGK) are disordered. Position 2 is an N-acetylalanine (Ala-2). Residues 7–22 (SGGGGSGGGSGSGTPG) are compositionally biased toward gly residues. The d domain stretch occupies residues 37 to 52 (MQGKRKALKLNFANPP). The residue at position 58 (Arg-58) is an Asymmetric dimethylarginine; alternate. Residue Arg-58 is modified to Omega-N-methylarginine; alternate. At Ser-90 the chain carries Phosphoserine. The Protein kinase domain maps to 102-367 (LKDLGEIGRG…YKELLKHPFI (266 aa)). ATP contacts are provided by residues 108-116 (IGRGAYGSV) and Lys-131. Asp-229 (proton acceptor) is an active-site residue. Phosphoserine; by MAP3K is present on Ser-257. Thr-261 carries the phosphothreonine; by MAP3K modification. Residues 364–387 (HPFILMYEERAVEVACYVCKILDQ) form a DVD domain region.

The protein belongs to the protein kinase superfamily. STE Ser/Thr protein kinase family. MAP kinase kinase subfamily. Interacts with SPAG9. Interacts (via its D domain) with its substrates MAPK8/JNK1, MAPK9/JNK2, MAPK10/JNK3, MAPK11 and MAPK14. Interacts (via its DVD domain) with MAP3Ks activators like MAP3K1/MEKK1 and MAP3K11/MLK3. Interacts with ARRB1, ARRB2 and MAPK8IP3/JIP3. Post-translationally, activated by phosphorylation on Ser-257 and Thr-261 by MAP kinase kinase kinases (MAP3Ks). In terms of tissue distribution, abundant expression is seen in the skeletal muscle. It is also widely expressed in other tissues.

It localises to the cytoplasm. It is found in the nucleus. It catalyses the reaction L-seryl-[protein] + ATP = O-phospho-L-seryl-[protein] + ADP + H(+). The catalysed reaction is L-threonyl-[protein] + ATP = O-phospho-L-threonyl-[protein] + ADP + H(+). The enzyme catalyses L-tyrosyl-[protein] + ATP = O-phospho-L-tyrosyl-[protein] + ADP + H(+). Its activity is regulated as follows. Activated in response to a variety of cellular stresses, including UV and gamma-irradiation, heat shock, hyperosmolarity, T-cell receptor stimulation, peroxide and inflammatory cytokines. Also activated by developmental cues. MAP2K4/MKK4 is activated by the majority of MKKKs, such as MAP3K5/ASK1, MAP3K1/MEKK1, MAP3K7/TAK1, MAP3K10/MLK2, MAP3K11/MLK3, MAP3K12/DLK and MAP3K13/LZK. Functionally, dual specificity protein kinase which acts as an essential component of the MAP kinase signal transduction pathway. Essential component of the stress-activated protein kinase/c-Jun N-terminal kinase (SAP/JNK) signaling pathway. With MAP2K7/MKK7, is the one of the only known kinase to directly activate the stress-activated protein kinase/c-Jun N-terminal kinases MAPK8/JNK1, MAPK9/JNK2 and MAPK10/JNK3. MAP2K4/MKK4 and MAP2K7/MKK7 both activate the JNKs by phosphorylation, but they differ in their preference for the phosphorylation site in the Thr-Pro-Tyr motif. MAP2K4 shows preference for phosphorylation of the Tyr residue and MAP2K7/MKK7 for the Thr residue. The phosphorylation of the Thr residue by MAP2K7/MKK7 seems to be the prerequisite for JNK activation at least in response to pro-inflammatory cytokines, while other stimuli activate both MAP2K4/MKK4 and MAP2K7/MKK7 which synergistically phosphorylate JNKs. MAP2K4 is required for maintaining peripheral lymphoid homeostasis. The MKK/JNK signaling pathway is also involved in mitochondrial death signaling pathway, including the release cytochrome c, leading to apoptosis. Whereas MAP2K7/MKK7 exclusively activates JNKs, MAP2K4/MKK4 additionally activates the p38 MAPKs MAPK11, MAPK12, MAPK13 and MAPK14. The protein is Dual specificity mitogen-activated protein kinase kinase 4 (MAP2K4) of Homo sapiens (Human).